Consider the following 484-residue polypeptide: ATP synthase subunit beta (484 aa).

168–175 serves as a coordination point for ATP; it reads GGAGVGKT.

Belongs to the ATPase alpha/beta chains family. As to quaternary structure, F-type ATPases have 2 components, CF(1) - the catalytic core - and CF(0) - the membrane proton channel. CF(1) has five subunits: alpha(3), beta(3), gamma(1), delta(1), epsilon(1). CF(0) has three main subunits: a(1), b(2) and c(9-12). The alpha and beta chains form an alternating ring which encloses part of the gamma chain. CF(1) is attached to CF(0) by a central stalk formed by the gamma and epsilon chains, while a peripheral stalk is formed by the delta and b chains.

The protein localises to the cell membrane. The catalysed reaction is ATP + H2O + 4 H(+)(in) = ADP + phosphate + 5 H(+)(out). Its function is as follows. Produces ATP from ADP in the presence of a proton gradient across the membrane. The catalytic sites are hosted primarily by the beta subunits. The polypeptide is ATP synthase subunit beta (Renibacterium salmoninarum (strain ATCC 33209 / DSM 20767 / JCM 11484 / NBRC 15589 / NCIMB 2235)).